A 785-amino-acid chain; its full sequence is Cadherin-7 (785 aa).

The N-terminal stretch at 1–27 (MKLGKVEFCHLLQIIALFLCLSGMNQA) is a signal peptide. The propeptide occupies 28 to 47 (EPSRSRSKPYFQSGRTRTKR). The Extracellular segment spans residues 48-607 (SWVWNQFFVL…AYILPAGLST (560 aa)). Cadherin domains follow at residues 49–153 (WVWN…EPKF), 154–262 (LDGP…PPRF), 263–377 (PRRS…PPVF), 378–482 (TSRL…APEF), and 482–599 (FAME…AEAY). N-linked (GlcNAc...) asparagine glycans are attached at residues Asn449 and Asn530. A helical transmembrane segment spans residues 608 to 628 (GALIAILACVLTLLVLVLLIV). The Cytoplasmic segment spans residues 629–785 (TMRRRKKEPL…YGSGPDCLYS (157 aa)).

It localises to the cell membrane. Cadherins are calcium-dependent cell adhesion proteins. They preferentially interact with themselves in a homophilic manner in connecting cells; cadherins may thus contribute to the sorting of heterogeneous cell types. The protein is Cadherin-7 (CDH7) of Gallus gallus (Chicken).